Reading from the N-terminus, the 323-residue chain is Methionyl-tRNA formyltransferase (323 aa).

Residue 118-121 (SLLP) participates in (6S)-5,6,7,8-tetrahydrofolate binding.

Belongs to the Fmt family.

It carries out the reaction L-methionyl-tRNA(fMet) + (6R)-10-formyltetrahydrofolate = N-formyl-L-methionyl-tRNA(fMet) + (6S)-5,6,7,8-tetrahydrofolate + H(+). Its function is as follows. Attaches a formyl group to the free amino group of methionyl-tRNA(fMet). The formyl group appears to play a dual role in the initiator identity of N-formylmethionyl-tRNA by promoting its recognition by IF2 and preventing the misappropriation of this tRNA by the elongation apparatus. The chain is Methionyl-tRNA formyltransferase from Buchnera aphidicola subsp. Baizongia pistaciae (strain Bp).